The sequence spans 282 residues: Pantothenate synthetase (282 aa).

30 to 37 provides a ligand contact to ATP; that stretch reads MGYLHEGH. The Proton donor role is filled by histidine 37. A (R)-pantoate-binding site is contributed by glutamine 61. Glutamine 61 serves as a coordination point for beta-alanine. 147-150 is a binding site for ATP; sequence GMKD. Glutamine 153 is a (R)-pantoate binding site. ATP-binding positions include valine 176 and 184 to 187; that span reads KSSR.

It belongs to the pantothenate synthetase family. In terms of assembly, homodimer.

Its subcellular location is the cytoplasm. The catalysed reaction is (R)-pantoate + beta-alanine + ATP = (R)-pantothenate + AMP + diphosphate + H(+). The protein operates within cofactor biosynthesis; (R)-pantothenate biosynthesis; (R)-pantothenate from (R)-pantoate and beta-alanine: step 1/1. Functionally, catalyzes the condensation of pantoate with beta-alanine in an ATP-dependent reaction via a pantoyl-adenylate intermediate. The polypeptide is Pantothenate synthetase (Bacillus cereus (strain ZK / E33L)).